We begin with the raw amino-acid sequence, 461 residues long: Ribulose bisphosphate carboxylase (461 aa).

Asparagine 112 serves as a coordination point for substrate. Lysine 167 serves as the catalytic Proton acceptor. Residue lysine 169 participates in substrate binding. Residues lysine 192, aspartate 194, and glutamate 195 each coordinate Mg(2+). Lysine 192 is modified (N6-carboxylysine). Histidine 288 acts as the Proton acceptor in catalysis. Residues arginine 289, histidine 322, and serine 369 each coordinate substrate.

The protein belongs to the RuBisCO large chain family. Type II subfamily. In terms of assembly, homodimer. It depends on Mg(2+) as a cofactor.

It carries out the reaction 2 (2R)-3-phosphoglycerate + 2 H(+) = D-ribulose 1,5-bisphosphate + CO2 + H2O. The enzyme catalyses D-ribulose 1,5-bisphosphate + O2 = 2-phosphoglycolate + (2R)-3-phosphoglycerate + 2 H(+). In terms of biological role, ruBisCO catalyzes two reactions: the carboxylation of D-ribulose 1,5-bisphosphate, the primary event in carbon dioxide fixation, as well as the oxidative fragmentation of the pentose substrate. Both reactions occur simultaneously and in competition at the same active site. In Rhodopseudomonas palustris (strain BisB5), this protein is Ribulose bisphosphate carboxylase.